A 297-amino-acid chain; its full sequence is Aspartate carbamoyltransferase catalytic subunit (297 aa).

Residues arginine 49 and threonine 50 each coordinate carbamoyl phosphate. Lysine 77 is a binding site for L-aspartate. Positions 99, 129, and 132 each coordinate carbamoyl phosphate. Residues arginine 162 and arginine 215 each coordinate L-aspartate. Carbamoyl phosphate is bound by residues glycine 256 and proline 257.

The protein belongs to the aspartate/ornithine carbamoyltransferase superfamily. ATCase family. In terms of assembly, heterododecamer (2C3:3R2) of six catalytic PyrB chains organized as two trimers (C3), and six regulatory PyrI chains organized as three dimers (R2).

The catalysed reaction is carbamoyl phosphate + L-aspartate = N-carbamoyl-L-aspartate + phosphate + H(+). Its pathway is pyrimidine metabolism; UMP biosynthesis via de novo pathway; (S)-dihydroorotate from bicarbonate: step 2/3. Functionally, catalyzes the condensation of carbamoyl phosphate and aspartate to form carbamoyl aspartate and inorganic phosphate, the committed step in the de novo pyrimidine nucleotide biosynthesis pathway. In Legionella pneumophila (strain Lens), this protein is Aspartate carbamoyltransferase catalytic subunit.